The primary structure comprises 273 residues: Type IV secretion system protein PtlF homolog (273 aa).

The signal sequence occupies residues 1 to 20; the sequence is MMAARMMAAGLAATALSAHA.

This sequence belongs to the TrbG/VirB9 family.

The protein resides in the cell outer membrane. This is Type IV secretion system protein PtlF homolog (ptlF) from Bordetella bronchiseptica (strain ATCC BAA-588 / NCTC 13252 / RB50) (Alcaligenes bronchisepticus).